A 398-amino-acid polypeptide reads, in one-letter code: Putative F-box protein At1g67450 (398 aa).

The region spanning 2–56 (TMMMSDLPNDLVEEILSRVPITSLGAVRSTCKRWNGLSKDRIVCKGDANQQFTGF) is the F-box domain.

This Arabidopsis thaliana (Mouse-ear cress) protein is Putative F-box protein At1g67450.